Here is a 321-residue protein sequence, read N- to C-terminus: Phosphate-import protein PhnD (321 aa).

Positions 1–22 (MKIRAHHKIATAAACVALLASA) are cleaved as a signal peptide. Cys-23 is lipidated: N-palmitoyl cysteine. Residue Cys-23 is the site of S-diacylglycerol cysteine attachment.

It belongs to the phosphate/phosphite/phosphonate binding protein family. In terms of assembly, the complex is composed of two ATP-binding proteins (PhnC), two transmembrane proteins (PhnE) and a solute-binding protein (PhnD).

It localises to the cell membrane. Functionally, part of the ABC transporter complex PhnCDE involved in phosphate import. Responsible for phosphate binding. In Mycolicibacterium smegmatis (strain ATCC 700084 / mc(2)155) (Mycobacterium smegmatis), this protein is Phosphate-import protein PhnD (phnD).